The primary structure comprises 352 residues: MTIAIGKSEQKRGLFDVADDWLRRDRFVFVGWSGLLLLPCAYFALGGWLTGTTFVTSWYTHGLASSYLEGCNFLTAAVSTPPNCMGHSLLLLWGPEAQSDFTRWCQLGGLWTFVALHGSFGLIGFMLRQFEIARAVKIRPYNAIAFSGPIAVFVSVFLIYPLGQAGWFFAPSFGVAAIFRFILFFQGFHNWTLNPFHMMGVAGILGAALLCAIHGATVENTLFEDGDGANTFRAFNPTQAEETYSMVTANRFWSQIFGVAFSNKRWLHFFMLFVPVTGLWMSALGVVGLALNLRAYDFVSQEIRAAEDPEFETFYTKNNLLNEGIRAWMAAQDQPHERLVFPEEVLPRGNAL.

T2 bears the N-acetylthreonine mark. T2 carries the post-translational modification Phosphothreonine. The chain crosses the membrane as a helical span at residues 40–60 (CAYFALGGWLTGTTFVTSWYT). Position 117 (H117) interacts with chlorophyll a. A helical membrane pass occupies residues 124–140 (GFMLRQFEIARAVKIRP). Pheophytin a-binding residues include Q129 and N142. Residues 152-165 (VFVSVFLIYPLGQA) traverse the membrane as a helical segment. Position 197 (H197) interacts with chlorophyll a. Residues 207-227 (AALLCAIHGATVENTLFEDGD) traverse the membrane as a helical segment. The a plastoquinone site is built by H214 and F261. Residue H214 participates in Fe cation binding. A Fe cation-binding site is contributed by H268. Residues 278-294 (GLWMSALGVVGLALNLR) form a helical membrane-spanning segment.

It belongs to the reaction center PufL/M/PsbA/D family. In terms of assembly, PSII is composed of 1 copy each of membrane proteins PsbA, PsbB, PsbC, PsbD, PsbE, PsbF, PsbH, PsbI, PsbJ, PsbK, PsbL, PsbM, PsbT, PsbX, PsbY, PsbZ, Psb30/Ycf12, at least 3 peripheral proteins of the oxygen-evolving complex and a large number of cofactors. It forms dimeric complexes. Requires The D1/D2 heterodimer binds P680, chlorophylls that are the primary electron donor of PSII, and subsequent electron acceptors. It shares a non-heme iron and each subunit binds pheophytin, quinone, additional chlorophylls, carotenoids and lipids. There is also a Cl(-1) ion associated with D1 and D2, which is required for oxygen evolution. The PSII complex binds additional chlorophylls, carotenoids and specific lipids. as cofactor.

The protein resides in the plastid. The protein localises to the chloroplast thylakoid membrane. The enzyme catalyses 2 a plastoquinone + 4 hnu + 2 H2O = 2 a plastoquinol + O2. Photosystem II (PSII) is a light-driven water:plastoquinone oxidoreductase that uses light energy to abstract electrons from H(2)O, generating O(2) and a proton gradient subsequently used for ATP formation. It consists of a core antenna complex that captures photons, and an electron transfer chain that converts photonic excitation into a charge separation. The D1/D2 (PsbA/PsbD) reaction center heterodimer binds P680, the primary electron donor of PSII as well as several subsequent electron acceptors. D2 is needed for assembly of a stable PSII complex. The sequence is that of Photosystem II D2 protein from Tupiella akineta (Green alga).